Reading from the N-terminus, the 349-residue chain is ALA-interacting subunit 3 (349 aa).

Over residues Met-1 to Ala-21 the composition is skewed to low complexity. The segment at Met-1 to Tyr-30 is disordered. Ser-2 carries the post-translational modification N-acetylserine. The helical transmembrane segment at Val-50 to Phe-70 threads the bilayer. Residues Asn-181, Asn-190, and Asn-223 are each glycosylated (N-linked (GlcNAc...) asparagine). A helical membrane pass occupies residues Leu-305–Ile-325.

Belongs to the CDC50/LEM3 family. Interacts with ALA2 and ALA3 in a heterologous system. As to expression, expressed in roots, leaves, stems, flowers and siliques.

The protein localises to the golgi apparatus membrane. It is found in the prevacuolar compartment membrane. The protein resides in the endoplasmic reticulum membrane. Required for the lipid transport activity of the ALA/ALIS P4-ATPase complex. The protein is ALA-interacting subunit 3 (ALIS3) of Arabidopsis thaliana (Mouse-ear cress).